The following is a 123-amino-acid chain: Neuropeptide-like peptides nlp-40 (123 aa).

The signal sequence occupies residues 1–17 (MKLVILLSFVATVAVFA). 3 propeptides span residues 30 to 31 (RA), 66 to 67 (KR), and 75 to 76 (KR).

As to expression, expressed in intestinal cells.

Its subcellular location is the secreted. It localises to the cytoplasmic vesicle. In terms of biological role, neuropeptide ligand for the G-protein coupled receptor aex-2. Activates and regulates the rhythmic calcium influx in DVB GABergic neurons during the defecation motor program, which is a coordinated series of three muscle contractions that occurs every 45 seconds. The polypeptide is Neuropeptide-like peptides nlp-40 (Caenorhabditis elegans).